A 272-amino-acid polypeptide reads, in one-letter code: uncharacterized protein (272 aa).

Residues phenylalanine 12–asparagine 34, aspartate 39–isoleucine 40, aspartate 77–valine 78, and asparagine 104 contribute to the NAD(+) site. Serine 153 is a substrate binding site. Residue tyrosine 170 is the Proton acceptor of the active site. Residues lysine 174 and valine 203–threonine 205 contribute to the NAD(+) site.

It belongs to the short-chain dehydrogenases/reductases (SDR) family.

This is an uncharacterized protein from Mycobacterium tuberculosis (strain CDC 1551 / Oshkosh).